Consider the following 437-residue polypeptide: uncharacterized protein (437 aa).

3 stretches are compositionally biased toward basic residues: residues 1–29 (MDTP…RHRN), 81–91 (LRGRHPRVRRV), and 101–118 (RRRH…GRNR). Disordered stretches follow at residues 1 to 31 (MDTP…RNDH) and 77 to 437 (EHVP…QGTR). Over residues 119-132 (HAGDRRAPGVDSRL) the composition is skewed to basic and acidic residues. Basic residues predominate over residues 133–142 (RQQHQHPRGR). Basic and acidic residues predominate over residues 143–164 (HASDRVQDGAHPRRQRLREQPR). The segment covering 165–190 (HAGRPRRRQPPRRGRSRGTHRRHLRQ) has biased composition (basic residues). Composition is skewed to basic and acidic residues over residues 198-209 (GPDEDQAREFRG) and 217-253 (HPPT…EAGR). Composition is skewed to basic residues over residues 284–293 (TVHRGGRLRG) and 324–348 (PHSR…RVRH). The segment covering 371–382 (DAAAYASVPAHA) has biased composition (low complexity).

This is an uncharacterized protein from Haloferax lucentense (strain DSM 14919 / JCM 9276 / NCIMB 13854 / Aa 2.2) (Haloferax alicantei).